A 159-amino-acid chain; its full sequence is Large ribosomal subunit protein uL15 (159 aa).

Residues 14 to 44 form a disordered region; sequence ASRKRVGRGRATGWGCTSGRGNKGQNSRAGA. The segment covering 23 to 35 has biased composition (gly residues); sequence RATGWGCTSGRGN.

Belongs to the universal ribosomal protein uL15 family. In terms of assembly, part of the 50S ribosomal subunit.

Functionally, binds to the 23S rRNA. This Solidesulfovibrio magneticus (strain ATCC 700980 / DSM 13731 / RS-1) (Desulfovibrio magneticus) protein is Large ribosomal subunit protein uL15.